Reading from the N-terminus, the 157-residue chain is Baculoviral IAP repeat-containing protein 5.2-A (157 aa).

A BIR repeat occupies 31-101; that stretch reads RLRTFSNWPF…KHSPSCLFIA (71 aa). Residue threonine 47 is modified to Phosphothreonine; by CDK1. Residues cysteine 70, cysteine 73, histidine 90, and cysteine 97 each contribute to the Zn(2+) site.

Belongs to the IAP family. In terms of assembly, component of the CPC at least composed of survivin/birc5, incenp, cdca8/borealin and/or cdca9/dasra-A, and aurkb/aurora-B. Interacts directly with incenp (via N-terminus). Interacts with rxra; the interaction is stronger in the absence of 9-cis retinoic acids. Ubiquitination is required for centrosome-targeting. As to expression, highly expressed in vascular endothelial cells of tadpoles.

The protein resides in the cytoplasm. It localises to the nucleus. The protein localises to the chromosome. Its subcellular location is the centromere. It is found in the cytoskeleton. The protein resides in the spindle. In terms of biological role, component of the chromosomal passenger complex (CPC), a complex that acts as a key regulator of mitosis. The CPC complex has essential functions at the centromere in ensuring correct chromosome alignment and segregation and is required for chromatin-induced microtubule stabilization and spindle assembly. Does not appear to exhibit anti-apoptotic activity. Plays a role in increasing blood vessel size during development. This is Baculoviral IAP repeat-containing protein 5.2-A (birc5.2-a) from Xenopus laevis (African clawed frog).